The chain runs to 347 residues: tRNA N6-adenosine threonylcarbamoyltransferase (347 aa).

Fe cation contacts are provided by histidine 113 and histidine 117. Substrate contacts are provided by residues 136-140, aspartate 170, glycine 183, aspartate 187, and asparagine 282; that span reads IVSGG. Residue aspartate 310 coordinates Fe cation.

The protein belongs to the KAE1 / TsaD family. Fe(2+) serves as cofactor.

The protein localises to the cytoplasm. It carries out the reaction L-threonylcarbamoyladenylate + adenosine(37) in tRNA = N(6)-L-threonylcarbamoyladenosine(37) in tRNA + AMP + H(+). Its function is as follows. Required for the formation of a threonylcarbamoyl group on adenosine at position 37 (t(6)A37) in tRNAs that read codons beginning with adenine. Is involved in the transfer of the threonylcarbamoyl moiety of threonylcarbamoyl-AMP (TC-AMP) to the N6 group of A37, together with TsaE and TsaB. TsaD likely plays a direct catalytic role in this reaction. The sequence is that of tRNA N6-adenosine threonylcarbamoyltransferase from Bifidobacterium adolescentis (strain ATCC 15703 / DSM 20083 / NCTC 11814 / E194a).